Consider the following 598-residue polypeptide: Leucine aminopeptidase 2, chloroplastic (598 aa).

The N-terminal 71 residues, 1–71 (MATAASTSAA…GHRARMGHTA (71 aa)), are a transit peptide targeting the chloroplast. Mn(2+) is bound by residues Lys367 and Asp372. The active site involves Lys379. 3 residues coordinate Mn(2+): Asp392, Asp452, and Glu454. The active site involves Arg456.

Belongs to the peptidase M17 family. In terms of assembly, homohexamer (dimer of homotrimers). Mn(2+) serves as cofactor.

Its subcellular location is the plastid. The protein localises to the chloroplast. The enzyme catalyses Release of an N-terminal amino acid, Xaa-|-Yaa-, in which Xaa is preferably Leu, but may be other amino acids including Pro although not Arg or Lys, and Yaa may be Pro. Amino acid amides and methyl esters are also readily hydrolyzed, but rates on arylamides are exceedingly low.. It carries out the reaction Release of N-terminal proline from a peptide.. Functionally, presumably involved in the processing and regular turnover of intracellular proteins. Catalyzes the removal of unsubstituted N-terminal amino acids from various peptides. This Oryza sativa subsp. japonica (Rice) protein is Leucine aminopeptidase 2, chloroplastic.